Consider the following 687-residue polypeptide: MGQGLGIKSCDFQAARNNAEHHTNDISSQRLFVRRGQPFTISLHFQAPVHTFLRALKKVALIAQTGKQPSKANGTQATFSVSSLGDRKWWSAMVEERDDQSWTISVTTPADAIIGHYSLLLQISGRKQCLGQFTLLFNPWNREDAVFLGNEAQRKEYLLNQNGLIFLGTADCIQAEPWDFGQLEEDVIDLGLSLLTVDNQVEKWGNPVHVARVLGALLHILKEKSVLPTAKIQTTEERALLNKRRGSAPILRQWVTGHGRPVYEGQAWVLAAVACTVLRGLGIPARVVTTFTSAQGTGGDLLVNEYYNEEGLQNGEDNRGRAWIFQTSTECWMARPDLLEVYDGWQILYPSALKGGEVLEACDLVPVRAVKEGIVWLTPAASDIFASINASCVVWKCGEDGTLELTDSNTKYFGNNISTKNVDCDCHEDITQNYKYPEGSSQEKMVLEKVQKYRMKHKNDGIYPPCCETDDPLHLFLKAPSSLALGKNVEISVNLLNPTDQEKEVQLAIGLQAMYYNGVLAAKLWRKNFVLILSANSAKKISTSLFNSNFEQSLPENSFLRLTAMATHSSLPCFAQQDIAIRRPHLAIEMPETAEQHQTLIALVSIHNPLDVPLEDCVISIFGKGLIHREKSYRVNSVQPRNTLRTQLKFVPMKVGCQRLTVEMDCNMFQNLTNFRTVMVVAPKSPA.

Gly2 is lipidated: N-myristoyl glycine. The interval 31-39 (LFVRRGQPF) is band 3 binding. Residue Ser247 is modified to Phosphoserine.

Belongs to the transglutaminase superfamily. Transglutaminase family. Component of the ankyrin-1 complex in the erythrocyte, composed of ANK1, RHCE, RHAG, SLC4A1, EPB42, GYPA, GYPB and AQP1. Interacts with SLC4A1 (via the cytoplasmic domain); this interaction is mediated by the SLC4A1 Band 3-I dimer. Interacts with ANK1 (via ANK 1-13 repeats). Interacts with AQP1 (via the C-terminal).

The protein resides in the cell membrane. The protein localises to the cytoplasm. It is found in the cytoskeleton. Component of the ankyrin-1 complex, a multiprotein complex involved in the stability and shape of the erythrocyte membrane. The chain is Protein 4.2 from Bos taurus (Bovine).